A 519-amino-acid chain; its full sequence is Galactose-1-phosphate uridylyltransferase (519 aa).

The protein belongs to the galactose-1-phosphate uridylyltransferase type 2 family.

It is found in the cytoplasm. It catalyses the reaction alpha-D-galactose 1-phosphate + UDP-alpha-D-glucose = alpha-D-glucose 1-phosphate + UDP-alpha-D-galactose. Its pathway is carbohydrate metabolism; galactose metabolism. The sequence is that of Galactose-1-phosphate uridylyltransferase from Caldanaerobacter subterraneus subsp. tengcongensis (strain DSM 15242 / JCM 11007 / NBRC 100824 / MB4) (Thermoanaerobacter tengcongensis).